We begin with the raw amino-acid sequence, 1014 residues long: MAAIKALQEWCRQQCEGYRDVSITNMTTSFRDGLAFCAILHRHRPDLINFNALRKENIYENNKLAFQVAEEQLGIPALLDAEDMVALKIPDRLSILTYVSQYYNYFHGRSPIGGMAGMKRPSSDSTEELSGKKKVPSQPAKLSSPVPTQRLPLSPARTNPVVQRNEGVSERPSPKAAPGTVGSSVSSICGVCGKHVHLVQRHLADGRLYHRSCFRCKQCSSTLHSGAYRATGEPGVFVCTHHSSEAVSVSPKLSNLASRQPGGGIADTRPIGVSQKVLETNGEATPLRARTAAWEHAGGNRAAKGFVQTELTPPATSRVHVGSPAGPRLPMSTVTTTSANSKATTHVTNSSPVGWSSSAQSSTGTSGSRPVVSPSALGAHLSVPQGQAASKGVKTQLNSSTDSSSTAPTPAWTSSSSRTQQAREKFFHNLSPAPAPAPASSSSSHASRVPTVVTAPSGKVSPLVNTSTSKVPSATVVTVPTSKASTVVTAPTSKAPTVVTVPISKAPTVVTAPTSKVSTVVTVPTSKASTVVTAPTSKASTVVTVPTGRGHVVVNTSASKVSGVVDNPAQESSREQALSVLRKALPGLTRAGSQAPSRSSPATSSVLITLPKNEVPPKVPSAKLSHSTTQAFSPTPKMEPTAPLSVGSTSWTSVSLQAGKKSPGISPGIGKTSAVSRPQAEVKGTSGPGPTSQEGQEEGPEGWRARLKPVDKSIPSARALEQKEPVLAEPRAGDTPRKASSSSDSSIHITLTPIQQKRTPCLADSGSSLAAPSPPSRRKKLVVPPTLDVSADWLQPELKKQDDQTRSCKEKTATWGTRESSAILDNDLVSPDEAVTSPVRLHPNYISQEELQRQLQDIERQLDALELRGVELEKRLRAAEGDASEDGLMVDWFRLIHEKQLLLRRESELMYKSKDQCLEERQLDLQGELRRLMEKPEGLKSPQDRKREQELLNQYVNTVNDRSDIVDNLDEDRLREQEEDQMLESMIQNLGLQRKKSKSFLSKIWSSKSKSGQT.

Residues 1-107 form the Calponin-homology (CH) domain; it reads MAAIKALQEW…YVSQYYNYFH (107 aa). The forms an intramolecular interaction with the C-terminal coiled coil domain keeping the protein in a closed conformation stretch occupies residues 1–261; it reads MAAIKALQEW…KLSNLASRQP (261 aa). Phosphoserine is present on residues serine 110, serine 144, and serine 154. A disordered region spans residues 114-181; the sequence is GMAGMKRPSS…PSPKAAPGTV (68 aa). Positions 187–249 constitute an LIM zinc-binding domain; that stretch reads SICGVCGKHV…THHSSEAVSV (63 aa). Phosphoserine is present on serine 250. Residues 262–394 are necessary and sufficient for interaction with actinins; sequence GGGIADTRPI…QGQAASKGVK (133 aa). The segment at 262–810 is mediates targeting to the cell plasma membrane; it reads GGGIADTRPI…QDDQTRSCKE (549 aa). Disordered stretches follow at residues 311 to 450 and 609 to 780; these read LTPP…SRVP and TLPK…RRKK. Residues 332–355 are compositionally biased toward polar residues; the sequence is STVTTTSANSKATTHVTNSSPVGW. The segment covering 356 to 368 has biased composition (low complexity); sequence SSSAQSSTGTSGS. Polar residues predominate over residues 384 to 398; the sequence is PQGQAASKGVKTQLN. 2 stretches are compositionally biased toward low complexity: residues 399–419 and 438–447; these read SSTD…SSRT and PASSSSSHAS. Polar residues-rich tracts occupy residues 624 to 633 and 646 to 656; these read LSHSTTQAFS and VGSTSWTSVSL. Basic and acidic residues-rich tracts occupy residues 701-711 and 720-737; these read EGWRARLKPVD and LEQK…DTPR. Residues 747–758 show a composition bias toward polar residues; it reads IHITLTPIQQKR. Threonine 759 carries the post-translational modification Phosphothreonine. A phosphoserine mark is found at serine 773 and serine 837. Residues 811–918 form a forms an intramolecular interaction with the N-terminal Calponin-homology and LIM zinc-binding domains-containing region keeping the protein in a closed conformation region; that stretch reads KTATWGTRES…LMYKSKDQCL (108 aa). The bMERB domain occupies 838–985; it reads PVRLHPNYIS…EQEEDQMLES (148 aa). Residues 845–885 are a coiled coil; it reads YISQEELQRQLQDIERQLDALELRGVELEKRLRAAEGDASE. A mediates interaction with RAB13 and is required for transition from the closed to the open conformation region spans residues 918 to 1014; it reads LEERQLDLQG…WSSKSKSGQT (97 aa).

Interacts with RAB13 (GTP-bound form); competes with RAB8A and is involved in tight junctions assembly. Interacts with RAB8A; competes with RAB13 and is involved in E-cadherin endocytic recycling. Interacts with RAB8B. Interacts (preferentially in opened conformation) with ACTN1 and ACTN4; stimulated by RAB13 activation. Interacts (via calponin-homology (CH) domain) with the filamins FLNA, FLNB and FLNC (via actin-binding domain).

The protein localises to the cell membrane. It is found in the cell junction. The protein resides in the tight junction. It localises to the recycling endosome. Its subcellular location is the cell projection. The protein localises to the neuron projection. It is found in the cytoplasm. The protein resides in the cytoskeleton. Functionally, effector of small Rab GTPases which is involved in junctional complexes assembly through the regulation of cell adhesion molecules transport to the plasma membrane and actin cytoskeleton reorganization. Regulates the endocytic recycling of occludins, claudins and E-cadherin to the plasma membrane and may thereby regulate the establishment of tight junctions and adherens junctions. In parallel, may regulate actin cytoskeleton reorganization directly through interaction with F-actin or indirectly through actinins and filamins. Most probably involved in the processes of epithelial cell differentiation, cell spreading and neurite outgrowth. Undergoes liquid-liquid phase separation to form tubular recycling endosomes. Plays 2 sequential roles in the biogenesis of tubular recycling endosomes: first organizes phase separation and then the closed form formed by interaction with RAB8A promotes endosomal tubulation. This Rattus norvegicus (Rat) protein is MICAL-like protein 2 (Micall2).